A 118-amino-acid chain; its full sequence is Protein BEX4 (118 aa).

Residues 14 to 50 (VEKDKKDKKGGKASKQSEEEPHHLEEVENKKPGGNVR) are disordered. Over residues 28–44 (KQSEEEPHHLEEVENKK) the composition is skewed to basic and acidic residues. The interval 30-88 (SEEEPHHLEEVENKKPGGNVRRKVRRLVPNFLWAIPNRHVDRNEGGEDVGRFVVQGTEV) is interaction with SIRT2. The segment at 30 to 118 (SEEEPHHLEE…DNHYDFCLIP (89 aa)) is interaction with alpha-tubulin. Cysteine 115 serves as a coordination point for Zn(2+).

It belongs to the BEX family. In terms of assembly, interacts with alpha-tubulin. Interacts with SIRT2. In terms of processing, ubiquitinated and degraded by the proteasome. As to expression, expressed in both Sertoli and germ cells as well as interstitial area of the testis (at protein level).

It is found in the cytoplasm. Its subcellular location is the cytoskeleton. It localises to the spindle pole. The protein resides in the nucleus. May play a role in microtubule deacetylation by negatively regulating the SIRT2 deacetylase activity toward alpha-tubulin and thereby participate in the control of cell cycle progression and genomic stability. In absence of reductive stress, acts as a pseudosubstrate for the CRL2(FEM1B) complex: associates with FEM1B via zinc, thereby preventing association between FEM1B and its substrates. This chain is Protein BEX4, found in Mus musculus (Mouse).